Consider the following 348-residue polypeptide: Fructose-1,6-bisphosphatase class 1 (348 aa).

Residues Glu-104, Asp-126, Leu-128, and Asp-129 each contribute to the Mg(2+) site. Substrate is bound by residues 129-132 (DGSS), Asn-221, Tyr-249, and Lys-279. Glu-285 lines the Mg(2+) pocket.

It belongs to the FBPase class 1 family. In terms of assembly, homotetramer. It depends on Mg(2+) as a cofactor.

The protein localises to the cytoplasm. It carries out the reaction beta-D-fructose 1,6-bisphosphate + H2O = beta-D-fructose 6-phosphate + phosphate. It participates in carbohydrate biosynthesis; Calvin cycle. This is Fructose-1,6-bisphosphatase class 1 from Thermosynechococcus vestitus (strain NIES-2133 / IAM M-273 / BP-1).